A 420-amino-acid chain; its full sequence is UDP-N-acetylglucosamine 1-carboxyvinyltransferase (420 aa).

Lysine 22 to asparagine 23 is a phosphoenolpyruvate binding site. Arginine 92 lines the UDP-N-acetyl-alpha-D-glucosamine pocket. The Proton donor role is filled by cysteine 116. Cysteine 116 carries the post-translational modification 2-(S-cysteinyl)pyruvic acid O-phosphothioketal. UDP-N-acetyl-alpha-D-glucosamine is bound by residues arginine 121–glutamine 125, aspartate 304, and isoleucine 326.

Belongs to the EPSP synthase family. MurA subfamily.

Its subcellular location is the cytoplasm. It catalyses the reaction phosphoenolpyruvate + UDP-N-acetyl-alpha-D-glucosamine = UDP-N-acetyl-3-O-(1-carboxyvinyl)-alpha-D-glucosamine + phosphate. It functions in the pathway cell wall biogenesis; peptidoglycan biosynthesis. Cell wall formation. Adds enolpyruvyl to UDP-N-acetylglucosamine. This Paraburkholderia xenovorans (strain LB400) protein is UDP-N-acetylglucosamine 1-carboxyvinyltransferase.